Reading from the N-terminus, the 172-residue chain is Transmembrane protein 91 (172 aa).

At 1–97 the chain is on the extracellular side; sequence MDNSSIQELQ…SPLLPHDHLG (97 aa). Residues 60 to 86 are disordered; that stretch reads GLGEPETPDFEDTLSSDSDSDDDGGDR. Acidic residues predominate over residues 65 to 83; sequence ETPDFEDTLSSDSDSDDDG. Residues 98 to 118 form a helical membrane-spanning segment; the sequence is LAVFSVLCCFWPVGIAAFCLA. Residues 119–139 lie on the Cytoplasmic side of the membrane; it reads HKTNKAWAKGDVQGAGAASRR. A helical transmembrane segment spans residues 140–160; that stretch reads AFLLGVLAVGLGLCTYAAALV. Residues 161-172 are Extracellular-facing; sequence TLAAYLASRDPP.

The protein belongs to the CD225/Dispanin family.

It localises to the membrane. In Mus musculus (Mouse), this protein is Transmembrane protein 91 (Tmem91).